A 143-amino-acid chain; its full sequence is NADH-quinone oxidoreductase subunit A (143 aa).

The next 3 membrane-spanning stretches (helical) occupy residues 8–28 (FGNV…GYLT), 63–83 (FYVV…LYPW), and 90–110 (LGVF…LGLV).

Belongs to the complex I subunit 3 family. As to quaternary structure, NDH-1 is composed of 14 different subunits. Subunits NuoA, H, J, K, L, M, N constitute the membrane sector of the complex.

Its subcellular location is the cell inner membrane. It carries out the reaction a quinone + NADH + 5 H(+)(in) = a quinol + NAD(+) + 4 H(+)(out). In terms of biological role, NDH-1 shuttles electrons from NADH, via FMN and iron-sulfur (Fe-S) centers, to quinones in the respiratory chain. The immediate electron acceptor for the enzyme in this species is believed to be a menaquinone. Couples the redox reaction to proton translocation (for every two electrons transferred, four hydrogen ions are translocated across the cytoplasmic membrane), and thus conserves the redox energy in a proton gradient. This is NADH-quinone oxidoreductase subunit A from Chlorobium phaeobacteroides (strain DSM 266 / SMG 266 / 2430).